We begin with the raw amino-acid sequence, 655 residues long: p-hydroxybenzoic acid efflux pump subunit AaeB (655 aa).

The next 11 membrane-spanning stretches (helical) occupy residues 13–33, 38–58, 69–89, 93–113, 121–141, 152–172, 370–390, 407–427, 431–451, 459–479, and 482–502; these read FAVK…HFQL, WAVL…GGEP, LRII…ISMI, LLMI…SSLV, WGLS…EPLL, EIVI…PRSI, LFWL…IAVV, FIYG…VIIP, QSML…GIEV, MGAL…TFHF, and FLDS…VILL.

The protein belongs to the aromatic acid exporter ArAE (TC 2.A.85) family.

Its subcellular location is the cell inner membrane. Its function is as follows. Forms an efflux pump with AaeA. Could function as a metabolic relief valve, allowing to eliminate certain compounds when they accumulate to high levels in the cell. The sequence is that of p-hydroxybenzoic acid efflux pump subunit AaeB from Salmonella heidelberg (strain SL476).